The primary structure comprises 146 residues: Cystatin-C (146 aa).

The first 26 residues, 1-26, serve as a signal peptide directing secretion; that stretch reads MAGPLRAPLLLLAILAVALALSPAAG. At Ser-43 the chain carries Phosphoserine. Positions 81-85 match the Secondary area of contact motif; sequence QIVAG. Disulfide bonds link Cys-99/Cys-109 and Cys-123/Cys-143.

Belongs to the cystatin family.

It localises to the secreted. As an inhibitor of cysteine proteinases, this protein is thought to serve an important physiological role as a local regulator of this enzyme activity. The protein is Cystatin-C (CST3) of Saimiri sciureus (Common squirrel monkey).